Consider the following 97-residue polypeptide: Putative pterin-4-alpha-carbinolamine dehydratase (97 aa).

The protein belongs to the pterin-4-alpha-carbinolamine dehydratase family.

The catalysed reaction is (4aS,6R)-4a-hydroxy-L-erythro-5,6,7,8-tetrahydrobiopterin = (6R)-L-erythro-6,7-dihydrobiopterin + H2O. This chain is Putative pterin-4-alpha-carbinolamine dehydratase, found in Phenylobacterium zucineum (strain HLK1).